A 139-amino-acid chain; its full sequence is Protein archease (139 aa).

Ca(2+) contacts are provided by Asp12, Asp138, and Ile139.

The protein belongs to the archease family.

In terms of biological role, activates the tRNA-splicing ligase complex by facilitating the enzymatic turnover of catalytic subunit RtcB. Acts by promoting the guanylylation of RtcB, a key intermediate step in tRNA ligation. Can also alter the NTP specificity of RtcB such that ATP, dGTP or ITP is used efficiently. In Saccharolobus islandicus (strain L.S.2.15 / Lassen #1) (Sulfolobus islandicus), this protein is Protein archease.